The primary structure comprises 85 residues: MARGSSWSCSGSSSSFSLCCFFFGSSDGLFPTPEAIPKGLKPTGAPNLLAPDSLAILSLNAALRFSSLSSSSFSSSLSPSLSSWP.

This is an uncharacterized protein from Saccharomyces cerevisiae (strain ATCC 204508 / S288c) (Baker's yeast).